An 847-amino-acid polypeptide reads, in one-letter code: DNA mismatch repair protein MutS (847 aa).

An ATP-binding site is contributed by 602–609 (GPNMSGKS). The disordered stretch occupies residues 788-807 (EKREASLPASRTDSQKVSEQ). Positions 796 to 807 (ASRTDSQKVSEQ) are enriched in polar residues.

It belongs to the DNA mismatch repair MutS family.

Its function is as follows. This protein is involved in the repair of mismatches in DNA. It is possible that it carries out the mismatch recognition step. This protein has a weak ATPase activity. The sequence is that of DNA mismatch repair protein MutS from Streptococcus gordonii (strain Challis / ATCC 35105 / BCRC 15272 / CH1 / DL1 / V288).